We begin with the raw amino-acid sequence, 179 residues long: Inner membrane-spanning protein YciB (179 aa).

The next 5 helical transmembrane spans lie at 24 to 44 (TATG…YAME), 49 to 69 (AMQK…LVLH), 76 to 96 (WKPT…LWAL), 121 to 141 (VAWI…AAYF), and 151 to 171 (LWGY…ISPH).

This sequence belongs to the YciB family.

It localises to the cell inner membrane. Functionally, plays a role in cell envelope biogenesis, maintenance of cell envelope integrity and membrane homeostasis. This Variovorax paradoxus (strain S110) protein is Inner membrane-spanning protein YciB.